Reading from the N-terminus, the 184-residue chain is Urease accessory protein UreE (184 aa).

The disordered stretch occupies residues glutamate 147 to arginine 184. Basic and acidic residues predominate over residues histidine 157–histidine 171.

The protein belongs to the UreE family.

The protein resides in the cytoplasm. Its function is as follows. Involved in urease metallocenter assembly. Binds nickel. Probably functions as a nickel donor during metallocenter assembly. The sequence is that of Urease accessory protein UreE from Burkholderia mallei (strain ATCC 23344).